We begin with the raw amino-acid sequence, 175 residues long: Large ribosomal subunit protein uL15 (175 aa).

Disordered stretches follow at residues 1 to 65 (MSTL…LPKF) and 155 to 175 (PESAAKAHAGKGVKAPRQPKA). The span at 12 to 21 (RSWHRKKRVG) shows a compositional bias: basic residues. Residues 22–38 (RGQGSGLGKTAGRGGKG) show a composition bias toward gly residues. The segment covering 160-169 (KAHAGKGVKA) has biased composition (low complexity).

It belongs to the universal ribosomal protein uL15 family. In terms of assembly, part of the 50S ribosomal subunit.

In terms of biological role, binds to the 23S rRNA. The protein is Large ribosomal subunit protein uL15 of Myxococcus xanthus (strain DK1622).